A 155-amino-acid chain; its full sequence is Ribosomal RNA large subunit methyltransferase H 1 (155 aa).

S-adenosyl-L-methionine is bound by residues L76, G108, and 127–132 (FSKMTF).

Belongs to the RNA methyltransferase RlmH family. Homodimer.

Its subcellular location is the cytoplasm. The enzyme catalyses pseudouridine(1915) in 23S rRNA + S-adenosyl-L-methionine = N(3)-methylpseudouridine(1915) in 23S rRNA + S-adenosyl-L-homocysteine + H(+). Specifically methylates the pseudouridine at position 1915 (m3Psi1915) in 23S rRNA. This is Ribosomal RNA large subunit methyltransferase H 1 from Thermoanaerobacter pseudethanolicus (strain ATCC 33223 / 39E) (Clostridium thermohydrosulfuricum).